Here is a 419-residue protein sequence, read N- to C-terminus: Gamma-glutamyl phosphate reductase (419 aa).

It belongs to the gamma-glutamyl phosphate reductase family.

It is found in the cytoplasm. The enzyme catalyses L-glutamate 5-semialdehyde + phosphate + NADP(+) = L-glutamyl 5-phosphate + NADPH + H(+). It participates in amino-acid biosynthesis; L-proline biosynthesis; L-glutamate 5-semialdehyde from L-glutamate: step 2/2. Catalyzes the NADPH-dependent reduction of L-glutamate 5-phosphate into L-glutamate 5-semialdehyde and phosphate. The product spontaneously undergoes cyclization to form 1-pyrroline-5-carboxylate. This is Gamma-glutamyl phosphate reductase from Caldicellulosiruptor bescii (strain ATCC BAA-1888 / DSM 6725 / KCTC 15123 / Z-1320) (Anaerocellum thermophilum).